Consider the following 432-residue polypeptide: MSGYARRQGAPPLSRTRSLVVPDAPAFYERRSCLPQLDCERPHGGDLHPHLFGFRPTFMCYVPSPVLASVGDTGFGYGKGKCTNQGPSGAPETRFGGDKLEDLEEANPFSFKEFLKTKNLSLSKEDTTTSRIYPKEASRHPLGLEHSSPASQLMGYGLESQQPFFEDPTRASNLEEDEDDGWNITYLPSAVDQTHSSRDTQDSPPCDTYLSFFSNSSELACPESLPPWTLSDTDSRISPASPAGSPNADFAAHEESLGDRHLRTLQISYEALKDENSKLRRKLNEVQSFSETQTEMVRTLERKLEAKMIKEESDFHDLESVVQQVEQNLELMTKRAVKAENHVLKLKQEINLLQAQLSNLRRENEALRSGQGASLSVVKQNTDVALQNLHLVMNSAHASIKQLVSGADTLNLVAEILKSIDRISEVKDEVDS.

A Phosphoserine modification is found at S18. Positions 126-143 are enriched in basic and acidic residues; sequence DTTTSRIYPKEASRHPLG. Residues 126 to 145 form a disordered region; that stretch reads DTTTSRIYPKEASRHPLGLE. S148 carries the phosphoserine modification. Positions 174–196 are required for interaction with PTPN13; sequence LEEDEDDGWNITYLPSAVDQTHS. A disordered region spans residues 226–250; sequence PPWTLSDTDSRISPASPAGSPNADF. 2 positions are modified to phosphoserine: S241 and S245. Coiled coils occupy residues 262-289 and 315-370; these read LRTL…VQSF and FHDL…LRSG.

The protein belongs to the ENTR1 family. Found in a complex with ENTR1, PTPN13 and GIT1. Interacts with PTPN13 (via the FERM domain). Interacts (via N-terminus) with GIT1 (via N- and C-terminus); this interaction is direct. Interacts with NOD2. Interacts (via N-terminus) with IFT88. Interacts with VPS35. Phosphorylated.

It localises to the cytoplasm. The protein resides in the early endosome. It is found in the endosome. The protein localises to the recycling endosome. Its subcellular location is the midbody. It localises to the cytoskeleton. The protein resides in the microtubule organizing center. It is found in the centrosome. The protein localises to the cilium basal body. In terms of biological role, may be involved in modulation of TNF response. May be involved in presentation of TNFRSF1A on the cell surface. Involved in the endosome-to-plasma membrane trafficking and recycling of SNX27-retromer-dependent cargo proteins, such as GLUT1. Involved in the regulation of cytokinesis; the function may involve PTPN13 and GIT1. Its function is as follows. Endosome-associated protein that plays a role in membrane receptor sorting, cytokinesis and ciliogenesis. Involved in the endosome-to-plasma membrane trafficking and recycling of SNX27-retromer-dependent cargo proteins, such as GLUT1. Involved in the regulation of cytokinesis; the function may involve PTPN13 and GIT1. Plays a role in the formation of cilia. Involved in cargo protein localization, such as PKD2, at primary cilia. Involved in the presentation of the tumor necrosis factor (TNF) receptor TNFRSF1A on the cell surface, and hence in the modulation of the TNF-induced apoptosis. This chain is Endosome-associated-trafficking regulator 1, found in Mus musculus (Mouse).